Here is a 465-residue protein sequence, read N- to C-terminus: Uronate isomerase (465 aa).

It belongs to the metallo-dependent hydrolases superfamily. Uronate isomerase family.

It carries out the reaction D-glucuronate = D-fructuronate. The catalysed reaction is aldehydo-D-galacturonate = keto-D-tagaturonate. It functions in the pathway carbohydrate metabolism; pentose and glucuronate interconversion. This is Uronate isomerase from Bacillus velezensis (strain DSM 23117 / BGSC 10A6 / LMG 26770 / FZB42) (Bacillus amyloliquefaciens subsp. plantarum).